A 164-amino-acid polypeptide reads, in one-letter code: ATP synthase subunit b (164 aa).

The helical transmembrane segment at 4-24 (LGINPTLFIAQLINFLLLIFI) threads the bilayer.

It belongs to the ATPase B chain family. F-type ATPases have 2 components, F(1) - the catalytic core - and F(0) - the membrane proton channel. F(1) has five subunits: alpha(3), beta(3), gamma(1), delta(1), epsilon(1). F(0) has four main subunits: a(1), b(2) and c(10-14). The alpha and beta chains form an alternating ring which encloses part of the gamma chain. F(1) is attached to F(0) by a central stalk formed by the gamma and epsilon chains, while a peripheral stalk is formed by the delta and b chains.

The protein resides in the cell membrane. F(1)F(0) ATP synthase produces ATP from ADP in the presence of a proton or sodium gradient. F-type ATPases consist of two structural domains, F(1) containing the extramembraneous catalytic core and F(0) containing the membrane proton channel, linked together by a central stalk and a peripheral stalk. During catalysis, ATP synthesis in the catalytic domain of F(1) is coupled via a rotary mechanism of the central stalk subunits to proton translocation. In terms of biological role, component of the F(0) channel, it forms part of the peripheral stalk, linking F(1) to F(0). The polypeptide is ATP synthase subunit b (Chloroflexus aurantiacus (strain ATCC 29366 / DSM 635 / J-10-fl)).